We begin with the raw amino-acid sequence, 411 residues long: Carbohydrate sulfotransferase 1 (411 aa).

The Cytoplasmic portion of the chain corresponds to 1–2; the sequence is MQ. A helical; Signal-anchor for type II membrane protein membrane pass occupies residues 3-23; the sequence is CSWKAVLLLALASIAIQYTAI. Residues 24–411 lie on the Lumenal side of the membrane; that stretch reads RTFTAKSFHT…VEERDFRPFL (388 aa). N-linked (GlcNAc...) asparagine glycosylation occurs at Asn-56. 69 to 75 lines the 3'-phosphoadenylyl sulfate pocket; it reads TRSGSSF. 2 N-linked (GlcNAc...) asparagine glycosylation sites follow: Asn-145 and Asn-189. 234 to 242 provides a ligand contact to 3'-phosphoadenylyl sulfate; sequence RDPRGILAS. The N-linked (GlcNAc...) asparagine glycan is linked to Asn-334. A Cell attachment site motif is present at residues 337–339; it reads RGD.

Belongs to the sulfotransferase 1 family. Gal/GlcNAc/GalNAc subfamily. In terms of tissue distribution, broadly expressed with highest levels in central nervous system. Expressed in cortex (at protein level). Expressed in high endothelial venules in peripheral lymph nodes, mesenteric lymph nodes and Peyer's patches.

The protein resides in the golgi apparatus membrane. The catalysed reaction is 3'-phosphoadenylyl sulfate + keratan = adenosine 3',5'-bisphosphate + keratan 6'-sulfate.. It functions in the pathway glycan metabolism. Its function is as follows. Sulfotransferase that utilizes 3'-phospho-5'-adenylyl sulfate (PAPS) as sulfonate donor to catalyze the transfer of sulfate to position 6 of internal galactose (Gal) residues of keratan. Cooperates with B4GALT4 and B3GNT7 glycosyltransferases and CHST6 sulfotransferase to construct and elongate disulfated disaccharide unit [-&gt;3(6-sulfoGalbeta)1-&gt;4(6-sulfoGlcNAcbeta)1-&gt;] within keratan sulfate polymer. Has a preference for sulfating keratan sulfate, but it also transfers sulfate to the unsulfated polymer. Involved in biosynthesis of phosphacan, a major keratan sulfate proteoglycan in the developing brain. Involved in biosynthesis of 6-sulfoGalbeta-containing O-linked glycans in high endothelial venules of lymph nodes. May act in a synergistic manner with CHST4 to generate sialyl 6',6-disulfo Lewis X motif, a recognition determinant for immune cell receptors implicated in leukocyte trafficking. Catalyzes sulfation of N-acetyllactosamine (LacNAc) oligosaccharides with highest efficiency for sialylated LacNAc structures. The polypeptide is Carbohydrate sulfotransferase 1 (Chst1) (Mus musculus (Mouse)).